The chain runs to 140 residues: Hemoglobin subunit beta (140 aa).

Residues 1-140 form the Globin domain; sequence GGSDVSAFLA…VGEALAKGYH (140 aa). Residues H57 and H86 each contribute to the heme b site.

It belongs to the globin family. Heterotetramer of either two alpha-B chains or two alpha-C chains and two beta chains.

The beta chain is a component of adult hemoglobins B. And C. The sequence is that of Hemoglobin subunit beta (HBB) from Aquarana catesbeiana (American bullfrog).